The primary structure comprises 81 residues: Photosystem I iron-sulfur center (81 aa).

2 4Fe-4S ferredoxin-type domains span residues 2–31 (SHAV…MVPW) and 39–68 (IASS…IRVY). [4Fe-4S] cluster is bound by residues cysteine 11, cysteine 14, cysteine 17, cysteine 21, cysteine 48, cysteine 51, cysteine 54, and cysteine 58.

As to quaternary structure, the cyanobacterial PSI reaction center is composed of one copy each of PsaA,B,C,D,E,F,I,J,K,L,M and X, and forms trimeric complexes. [4Fe-4S] cluster is required as a cofactor.

Its subcellular location is the cellular thylakoid membrane. It catalyses the reaction reduced [plastocyanin] + hnu + oxidized [2Fe-2S]-[ferredoxin] = oxidized [plastocyanin] + reduced [2Fe-2S]-[ferredoxin]. Apoprotein for the two 4Fe-4S centers FA and FB of photosystem I (PSI); essential for photochemical activity. FB is the terminal electron acceptor of PSI, donating electrons to ferredoxin. The C-terminus interacts with PsaA/B/D and helps assemble the protein into the PSI complex. Required for binding of PsaD and PsaE to PSI. PSI is a plastocyanin/cytochrome c6-ferredoxin oxidoreductase, converting photonic excitation into a charge separation, which transfers an electron from the donor P700 chlorophyll pair to the spectroscopically characterized acceptors A0, A1, FX, FA and FB in turn. The chain is Photosystem I iron-sulfur center from Prochlorococcus marinus (strain MIT 9211).